The chain runs to 451 residues: tRNA-2-methylthio-N(6)-dimethylallyladenosine synthase (451 aa).

The MTTase N-terminal domain maps to 5–121; the sequence is RQYHITTFGC…LQDLLEQVEG (117 aa). Cys14, Cys50, Cys84, Cys156, Cys160, and Cys163 together coordinate [4Fe-4S] cluster. Residues 142–379 enclose the Radical SAM core domain; the sequence is RDSTVTAWVN…NHLVAQKAAE (238 aa). In terms of domain architecture, TRAM spans 382–446; the sequence is QRYAGRIEEV…AFSLTGEAVE (65 aa).

It belongs to the methylthiotransferase family. MiaB subfamily. As to quaternary structure, monomer. [4Fe-4S] cluster serves as cofactor.

The protein localises to the cytoplasm. It carries out the reaction N(6)-dimethylallyladenosine(37) in tRNA + (sulfur carrier)-SH + AH2 + 2 S-adenosyl-L-methionine = 2-methylsulfanyl-N(6)-dimethylallyladenosine(37) in tRNA + (sulfur carrier)-H + 5'-deoxyadenosine + L-methionine + A + S-adenosyl-L-homocysteine + 2 H(+). Functionally, catalyzes the methylthiolation of N6-(dimethylallyl)adenosine (i(6)A), leading to the formation of 2-methylthio-N6-(dimethylallyl)adenosine (ms(2)i(6)A) at position 37 in tRNAs that read codons beginning with uridine. The protein is tRNA-2-methylthio-N(6)-dimethylallyladenosine synthase of Picosynechococcus sp. (strain ATCC 27264 / PCC 7002 / PR-6) (Agmenellum quadruplicatum).